The following is a 362-amino-acid chain: RNA-binding protein 48 (362 aa).

The 79-residue stretch at 46 to 124 (WYLLIQGVPA…GLLHVCYAPE (79 aa)) folds into the RRM domain. Positions 334–362 (EVISSVPKPPEDKVEDVHRSRPLKQRRRI) are disordered. The segment covering 342-352 (PPEDKVEDVHR) has biased composition (basic and acidic residues). The segment covering 353–362 (SRPLKQRRRI) has biased composition (basic residues).

It belongs to the RBM48 family. In terms of assembly, component of the minor spliceosome. Within this complex, interacts with ARMC7 and PRPF8/PRP8.

As a component of the minor spliceosome, involved in the splicing of U12-type introns in pre-mRNAs. The sequence is that of RNA-binding protein 48 (RBM48) from Bos taurus (Bovine).